A 94-amino-acid chain; its full sequence is Selenoprotein K (94 aa).

Residues 20-42 (VSFLTDFFWGIAEFVVFFFKTLL) form a helical membrane-spanning segment. A disordered region spans residues 46–94 (VKKRRGYGSSSDSRYDDGRGPPGNPPRRMGRISHLRGPSPPPMAGGUGR). Position 92 (Sec-92) is a non-standard amino acid, selenocysteine.

Belongs to the selenoprotein K family. Interacts with DERL1, DERL2, DERL3 and SELENOS. The SELENOK-SELENOS complex interacts with VCP. Interacts with ZDHHC6. Post-translationally, cleaved by CAPN2/m-calpain in resting macrophages but not in activated macrophages. Macrophage activation up-regulates expression of the calpain inhibitor CAST/calpastatin, resulting in inhibition of CAPN2 activity. Truncated SELENOK proteins produced by failed UGA/Sec decoding are ubiquitinated by the CRL2(KLHDC2) complex, which recognizes the diglycine (Gly-Gly) at the C-terminus of truncated SELENOK proteins. High expression in spleen and intestine (at protein level). Expressed in a range of immune cells including T and B-cells and also in myeloid cells including macrophages, neutrophils and dendritic cells (at protein level).

The protein resides in the endoplasmic reticulum membrane. It localises to the cell membrane. Functionally, required for Ca(2+) flux in immune cells and plays a role in T-cell proliferation and in T-cell and neutrophil migration. Involved in endoplasmic reticulum-associated degradation (ERAD) of soluble glycosylated proteins. Required for palmitoylation and cell surface expression of CD36 and involved in macrophage uptake of low-density lipoprotein and in foam cell formation. Together with ZDHHC6, required for palmitoylation of ITPR1 in immune cells, leading to regulate ITPR1 stability and function. Plays a role in protection of cells from ER stress-induced apoptosis. Protects cells from oxidative stress when overexpressed in cardiomyocytes. This chain is Selenoprotein K, found in Mus musculus (Mouse).